Here is a 1164-residue protein sequence, read N- to C-terminus: DNA-directed RNA polymerase 132 kDa polypeptide (1164 aa).

The protein belongs to the RNA polymerase beta chain family. In terms of assembly, the DNA-dependent RNA polymerase used for intermediate and late genes expression consists of eight subunits (147) kDa, (133) kDa, (35) kDa, (30) kDa, (22) kDa, (19) kDa, (18) kDa and (7) kDa totalling more than 500 kDa in mass. The same holoenzyme, with the addition of the transcription-specificity factor RAP94, is used for early gene expression.

The protein localises to the virion. The enzyme catalyses RNA(n) + a ribonucleoside 5'-triphosphate = RNA(n+1) + diphosphate. In terms of biological role, part of the DNA-dependent RNA polymerase which catalyzes the transcription of viral DNA into RNA using the four ribonucleoside triphosphates as substrates. Responsible for the transcription of early, intermediate and late genes. DNA-dependent RNA polymerase associates with the early transcription factor (ETF), itself composed of D6 and A7, thereby allowing the early genes transcription. Late transcription, and probably also intermediate transcription, require newly synthesized RNA polymerase. The polypeptide is DNA-directed RNA polymerase 132 kDa polypeptide (RPO132) (Monkeypox virus (strain Zaire-96-I-16) (MPX)).